The chain runs to 1958 residues: Echinoderm microtubule-associated protein-like 6 (1958 aa).

WD repeat units lie at residues 59–100 (GHND…TVSL), 104–145 (VHTH…LLAS), 148–187 (GHSD…LTAK), 195–233 (GDLQ…RTIQ), 235–273 (AHSA…TKID), 280–321 (GYKG…LILQ), 323–362 (HCEG…LIAR), 364–403 (NMEE…EVVH), 406–445 (DRKE…KKIG), and 561–601 (GHSA…VSNG). A disordered region spans residues 603–626 (LETAPQEGGADSYSEESDSDLSDV). Over residues 615–626 (YSEESDSDLSDV) the composition is skewed to acidic residues. 10 WD repeats span residues 725–766 (GHDD…CLSL), 770–811 (QHQR…KIAT), 814–853 (GHKD…FTSK), 861–900 (GKLE…KTVK), 901–940 (AHDG…KTYA), 996–1035 (HMEG…RMLA), 1038–1077 (KLKK…DMVS), 1080–1120 (HRKE…RVGI), 1191–1230 (SDIT…QHAR), and 1236–1276 (GHSA…TQES). Residues 1322–1337 (KPHQQLKEVSVEERPP) show a composition bias toward basic and acidic residues. A disordered region spans residues 1322–1353 (KPHQQLKEVSVEERPPVSRAAPQPEKLQKNNI). WD repeat units follow at residues 1412–1456 (EHTD…TLSM), 1460–1501 (FHSK…KVAS), 1504–1543 (GHLE…LLYK), 1553–1591 (AKMQ…RLVA), 1593–1638 (AHTG…CRAF), 1685–1724 (HMEG…LLNK), 1726–1767 (SLGH…GKKR), 1768–1807 (DRKS…NLNR), 1880–1919 (ADKA…KFAK), and 1925–1958 (GHSA…WRCL).

It belongs to the WD repeat EMAP family.

The protein resides in the cytoplasm. The protein localises to the cytoskeleton. Functionally, may modify the assembly dynamics of microtubules, such that microtubules are slightly longer, but more dynamic. The polypeptide is Echinoderm microtubule-associated protein-like 6 (EML6) (Homo sapiens (Human)).